Here is a 200-residue protein sequence, read N- to C-terminus: Ribonuclease HII (200 aa).

The RNase H type-2 domain occupies 9-198 (ALIAGVDEVG…VQRVLAQAKG (190 aa)). A divalent metal cation contacts are provided by Asp15, Glu16, and Asp107.

The protein belongs to the RNase HII family. Mn(2+) serves as cofactor. It depends on Mg(2+) as a cofactor.

The protein resides in the cytoplasm. The catalysed reaction is Endonucleolytic cleavage to 5'-phosphomonoester.. Endonuclease that specifically degrades the RNA of RNA-DNA hybrids. This Pseudoalteromonas translucida (strain TAC 125) protein is Ribonuclease HII.